The chain runs to 409 residues: Wadjet protein JetD (409 aa).

Its function is as follows. Component of antiplasmid transformation system Wadjet type I, composed of JetA, JetB, JetC and JetD. Expression of Wadjet type I in B.subtilis (strain BEST7003) reduces the transformation efficiency of plasmid pHCMC05. The chain is Wadjet protein JetD from Bacillus cereus (strain Q1).